Reading from the N-terminus, the 346-residue chain is 3 beta-hydroxysteroid dehydrogenase/Delta 5--&gt;4-isomerase (346 aa).

Tyrosine 147 acts as the Proton acceptor in catalysis. Lysine 151 provides a ligand contact to NAD(+).

Belongs to the 3-beta-HSD family.

The enzyme catalyses a 3beta-hydroxy-Delta(5)-steroid + NAD(+) = a 3-oxo-Delta(5)-steroid + NADH + H(+). The catalysed reaction is a 3-oxo-Delta(5)-steroid = a 3-oxo-Delta(4)-steroid. The protein operates within lipid metabolism; steroid biosynthesis. Its function is as follows. Catalyzes the oxidative conversion of Delta(5)-ene-3-beta-hydroxy steroid, and the oxidative conversion of ketosteroids. The 3-beta-HSD enzymatic system plays a crucial role in the biosynthesis of all classes of hormonal steroids. During viral infection, steroid production contributes to virulence by inhibiting the host inflammatory response. The sequence is that of 3 beta-hydroxysteroid dehydrogenase/Delta 5--&gt;4-isomerase (OPG174) from Homo sapiens (Human).